A 180-amino-acid polypeptide reads, in one-letter code: Large ribosomal subunit protein uL5 (180 aa).

The protein belongs to the universal ribosomal protein uL5 family. In terms of assembly, part of the 50S ribosomal subunit; part of the 5S rRNA/L5/L18/L25 subcomplex. Contacts the 5S rRNA and the P site tRNA. Forms a bridge to the 30S subunit in the 70S ribosome.

This is one of the proteins that bind and probably mediate the attachment of the 5S RNA into the large ribosomal subunit, where it forms part of the central protuberance. In the 70S ribosome it contacts protein S13 of the 30S subunit (bridge B1b), connecting the 2 subunits; this bridge is implicated in subunit movement. Contacts the P site tRNA; the 5S rRNA and some of its associated proteins might help stabilize positioning of ribosome-bound tRNAs. This chain is Large ribosomal subunit protein uL5, found in Xanthomonas euvesicatoria pv. vesicatoria (strain 85-10) (Xanthomonas campestris pv. vesicatoria).